A 430-amino-acid polypeptide reads, in one-letter code: Adenylosuccinate synthetase (430 aa).

GTP-binding positions include 13 to 19 (GDEGKGK) and 41 to 43 (GHT). Asp-14 functions as the Proton acceptor in the catalytic mechanism. Mg(2+)-binding residues include Asp-14 and Gly-41. IMP is bound by residues 14-17 (DEGK), 39-42 (NAGH), Thr-130, Arg-144, Gln-225, Thr-240, and Arg-304. The active-site Proton donor is His-42. Residue 300–306 (ATTGRAR) coordinates substrate. Residues Arg-306, 332–334 (KLD), and 414–416 (STG) contribute to the GTP site.

Belongs to the adenylosuccinate synthetase family. In terms of assembly, homodimer. Requires Mg(2+) as cofactor.

The protein localises to the cytoplasm. The catalysed reaction is IMP + L-aspartate + GTP = N(6)-(1,2-dicarboxyethyl)-AMP + GDP + phosphate + 2 H(+). It functions in the pathway purine metabolism; AMP biosynthesis via de novo pathway; AMP from IMP: step 1/2. Functionally, plays an important role in the de novo pathway of purine nucleotide biosynthesis. Catalyzes the first committed step in the biosynthesis of AMP from IMP. The protein is Adenylosuccinate synthetase of Pseudomonas syringae pv. syringae (strain B728a).